A 453-amino-acid chain; its full sequence is Homogentisate 1,2-dioxygenase (453 aa).

His306 (proton acceptor) is an active-site residue. Positions 349 and 355 each coordinate Fe cation. Positions 364 and 385 each coordinate homogentisate. Fe cation is bound at residue His385.

The protein belongs to the homogentisate dioxygenase family. As to quaternary structure, hexamer; dimer of trimers. It depends on Fe cation as a cofactor.

The enzyme catalyses homogentisate + O2 = 4-maleylacetoacetate + H(+). It functions in the pathway amino-acid degradation; L-phenylalanine degradation; acetoacetate and fumarate from L-phenylalanine: step 4/6. Involved in the catabolism of homogentisate (2,5-dihydroxyphenylacetate or 2,5-OH-PhAc), a central intermediate in the degradation of phenylalanine and tyrosine. Catalyzes the oxidative ring cleavage of the aromatic ring of homogentisate to yield maleylacetoacetate. The sequence is that of Homogentisate 1,2-dioxygenase from Rhizobium johnstonii (strain DSM 114642 / LMG 32736 / 3841) (Rhizobium leguminosarum bv. viciae).